Reading from the N-terminus, the 428-residue chain is Adenylosuccinate synthetase (428 aa).

Residues Gly12 to Lys18 and Gly40 to Thr42 each bind GTP. Asp13 functions as the Proton acceptor in the catalytic mechanism. Mg(2+) contacts are provided by Asp13 and Gly40. Residues Asp13–Lys16, Asn38–His41, Thr129, Arg143, Gln224, Thr239, and Arg303 contribute to the IMP site. His41 functions as the Proton donor in the catalytic mechanism. Residue Val299–Arg305 coordinates substrate. GTP contacts are provided by residues Arg305, Lys331–Asp333, and Ala410–Gly412.

The protein belongs to the adenylosuccinate synthetase family. In terms of assembly, homodimer. It depends on Mg(2+) as a cofactor.

Its subcellular location is the cytoplasm. The enzyme catalyses IMP + L-aspartate + GTP = N(6)-(1,2-dicarboxyethyl)-AMP + GDP + phosphate + 2 H(+). The protein operates within purine metabolism; AMP biosynthesis via de novo pathway; AMP from IMP: step 1/2. Functionally, plays an important role in the de novo pathway of purine nucleotide biosynthesis. Catalyzes the first committed step in the biosynthesis of AMP from IMP. The sequence is that of Adenylosuccinate synthetase from Francisella tularensis subsp. novicida (strain U112).